The chain runs to 167 residues: NADH-quinone oxidoreductase subunit B (167 aa).

Residues cysteine 40, cysteine 41, cysteine 105, and cysteine 134 each coordinate [4Fe-4S] cluster.

The protein belongs to the complex I 20 kDa subunit family. NDH-1 is composed of 14 different subunits. Subunits NuoB, C, D, E, F, and G constitute the peripheral sector of the complex. [4Fe-4S] cluster is required as a cofactor.

Its subcellular location is the cell inner membrane. The enzyme catalyses a quinone + NADH + 5 H(+)(in) = a quinol + NAD(+) + 4 H(+)(out). Functionally, NDH-1 shuttles electrons from NADH, via FMN and iron-sulfur (Fe-S) centers, to quinones in the respiratory chain. The immediate electron acceptor for the enzyme in this species is believed to be ubiquinone. Couples the redox reaction to proton translocation (for every two electrons transferred, four hydrogen ions are translocated across the cytoplasmic membrane), and thus conserves the redox energy in a proton gradient. In Campylobacter jejuni subsp. jejuni serotype O:2 (strain ATCC 700819 / NCTC 11168), this protein is NADH-quinone oxidoreductase subunit B.